We begin with the raw amino-acid sequence, 103 residues long: Large ribosomal subunit protein bL21 (103 aa).

It belongs to the bacterial ribosomal protein bL21 family. In terms of assembly, part of the 50S ribosomal subunit. Contacts protein L20.

This protein binds to 23S rRNA in the presence of protein L20. The chain is Large ribosomal subunit protein bL21 from Serratia proteamaculans (strain 568).